The chain runs to 201 residues: IMP cyclohydrolase (201 aa).

It belongs to the archaeal IMP cyclohydrolase family.

The catalysed reaction is IMP + H2O = 5-formamido-1-(5-phospho-D-ribosyl)imidazole-4-carboxamide. It participates in purine metabolism; IMP biosynthesis via de novo pathway; IMP from 5-formamido-1-(5-phospho-D-ribosyl)imidazole-4-carboxamide: step 1/1. In terms of biological role, catalyzes the cyclization of 5-formylamidoimidazole-4-carboxamide ribonucleotide to IMP. In Methanococcus maripaludis (strain DSM 14266 / JCM 13030 / NBRC 101832 / S2 / LL), this protein is IMP cyclohydrolase.